Consider the following 214-residue polypeptide: Protein DMP6 (214 aa).

Transmembrane regions (helical) follow at residues 52–72 (LANL…PICT), 83–103 (FMTA…SFTD), 143–163 (FIDF…VLFD), and 178–198 (VVEL…MVFA).

The protein belongs to the plant DMP1 protein family. As to expression, expressed constitutively in leaves, stems, flowers, siliques and roots (e.g. root hairs).

The protein resides in the vacuole membrane. Its function is as follows. Involved in membrane remodeling. This Arabidopsis thaliana (Mouse-ear cress) protein is Protein DMP6.